The chain runs to 220 residues: MAKQEYKQLPKRAEVHSATEQFKDTIKTSLGLDLFKGLGLTIKEFFSPSVTIHYPMEQLPLSPRYRAVHHLQRLLDSGSERCIGCGLCEKICTSNCIRIITHKGEDNRKKIDSYTINLGRCIYCGLCAEVCPELAIVMGNRFENASTQRSQYGSKSEFLTNEQDAKNCSHAEFLGFGAVSPNYNERMQATPLDYVQEPSKEESKEETPTNPESNKGDENV.

4Fe-4S ferredoxin-type domains are found at residues 71–102 (LQRL…IITH) and 112–141 (DSYT…MGNR). C82, C85, C88, C92, C121, C124, C127, and C131 together coordinate [4Fe-4S] cluster. The tract at residues 187–220 (MQATPLDYVQEPSKEESKEETPTNPESNKGDENV) is disordered. Residues 198–207 (PSKEESKEET) show a composition bias toward basic and acidic residues.

This sequence belongs to the complex I 23 kDa subunit family. In terms of assembly, NDH-1 is composed of 14 different subunits. Subunits NuoA, H, J, K, L, M, N constitute the membrane sector of the complex. It depends on [4Fe-4S] cluster as a cofactor.

The protein localises to the cell inner membrane. It catalyses the reaction a quinone + NADH + 5 H(+)(in) = a quinol + NAD(+) + 4 H(+)(out). In terms of biological role, NDH-1 shuttles electrons from NADH, via FMN and iron-sulfur (Fe-S) centers, to quinones in the respiratory chain. The immediate electron acceptor for the enzyme in this species is believed to be ubiquinone. Couples the redox reaction to proton translocation (for every two electrons transferred, four hydrogen ions are translocated across the cytoplasmic membrane), and thus conserves the redox energy in a proton gradient. This is NADH-quinone oxidoreductase subunit I from Helicobacter pylori (strain HPAG1).